The primary structure comprises 227 residues: Phosphoribosylformylglycinamidine synthase subunit PurQ (227 aa).

The Glutamine amidotransferase type-1 domain occupies 2-227 (RWAIVRFPGA…FLGLVREVAR (226 aa)). Cys85 acts as the Nucleophile in catalysis. Catalysis depends on residues His200 and Glu202.

Part of the FGAM synthase complex composed of 1 PurL, 1 PurQ and 2 PurS subunits.

It localises to the cytoplasm. It carries out the reaction N(2)-formyl-N(1)-(5-phospho-beta-D-ribosyl)glycinamide + L-glutamine + ATP + H2O = 2-formamido-N(1)-(5-O-phospho-beta-D-ribosyl)acetamidine + L-glutamate + ADP + phosphate + H(+). It catalyses the reaction L-glutamine + H2O = L-glutamate + NH4(+). It participates in purine metabolism; IMP biosynthesis via de novo pathway; 5-amino-1-(5-phospho-D-ribosyl)imidazole from N(2)-formyl-N(1)-(5-phospho-D-ribosyl)glycinamide: step 1/2. Functionally, part of the phosphoribosylformylglycinamidine synthase complex involved in the purines biosynthetic pathway. Catalyzes the ATP-dependent conversion of formylglycinamide ribonucleotide (FGAR) and glutamine to yield formylglycinamidine ribonucleotide (FGAM) and glutamate. The FGAM synthase complex is composed of three subunits. PurQ produces an ammonia molecule by converting glutamine to glutamate. PurL transfers the ammonia molecule to FGAR to form FGAM in an ATP-dependent manner. PurS interacts with PurQ and PurL and is thought to assist in the transfer of the ammonia molecule from PurQ to PurL. The protein is Phosphoribosylformylglycinamidine synthase subunit PurQ of Thermus thermophilus (strain ATCC BAA-163 / DSM 7039 / HB27).